The sequence spans 193 residues: Acyl carrier protein phosphodiesterase (193 aa).

Belongs to the AcpH family.

The enzyme catalyses holo-[ACP] + H2O = apo-[ACP] + (R)-4'-phosphopantetheine + H(+). In terms of biological role, converts holo-ACP to apo-ACP by hydrolytic cleavage of the phosphopantetheine prosthetic group from ACP. The protein is Acyl carrier protein phosphodiesterase of Enterobacter sp. (strain 638).